The sequence spans 211 residues: ATP phosphoribosyltransferase (211 aa).

It belongs to the ATP phosphoribosyltransferase family. Short subfamily. Heteromultimer composed of HisG and HisZ subunits.

It is found in the cytoplasm. It carries out the reaction 1-(5-phospho-beta-D-ribosyl)-ATP + diphosphate = 5-phospho-alpha-D-ribose 1-diphosphate + ATP. It functions in the pathway amino-acid biosynthesis; L-histidine biosynthesis; L-histidine from 5-phospho-alpha-D-ribose 1-diphosphate: step 1/9. Functionally, catalyzes the condensation of ATP and 5-phosphoribose 1-diphosphate to form N'-(5'-phosphoribosyl)-ATP (PR-ATP). Has a crucial role in the pathway because the rate of histidine biosynthesis seems to be controlled primarily by regulation of HisG enzymatic activity. The sequence is that of ATP phosphoribosyltransferase from Pseudomonas fluorescens (strain ATCC BAA-477 / NRRL B-23932 / Pf-5).